Here is a 968-residue protein sequence, read N- to C-terminus: RNA polymerase-associated protein RapA (968 aa).

One can recognise a Helicase ATP-binding domain in the interval 164-334 (EVGQRHAPRV…FARLRLLDPD (171 aa)). 177-184 (DEVGLGKT) provides a ligand contact to ATP. The DEAH box motif lies at 280–283 (DEAH). In terms of domain architecture, Helicase C-terminal spans 490–664 (RVEWLLNYLI…ATPSEQEGLD (175 aa)).

The protein belongs to the SNF2/RAD54 helicase family. RapA subfamily. In terms of assembly, interacts with the RNAP. Has a higher affinity for the core RNAP than for the holoenzyme. Its ATPase activity is stimulated by binding to RNAP.

Its function is as follows. Transcription regulator that activates transcription by stimulating RNA polymerase (RNAP) recycling in case of stress conditions such as supercoiled DNA or high salt concentrations. Probably acts by releasing the RNAP, when it is trapped or immobilized on tightly supercoiled DNA. Does not activate transcription on linear DNA. Probably not involved in DNA repair. The chain is RNA polymerase-associated protein RapA from Yersinia enterocolitica serotype O:8 / biotype 1B (strain NCTC 13174 / 8081).